The following is a 310-amino-acid chain: 2-methoxy-6-polyprenyl-1,4-benzoquinol methylase, mitochondrial (310 aa).

The N-terminal 6 residues, 1–6, are a transit peptide targeting the mitochondrion; sequence MAHMRS. Residues Thr99, Asp154, and 182-183 each bind S-adenosyl-L-methionine; that span reads DA.

Belongs to the class I-like SAM-binding methyltransferase superfamily. MenG/UbiE family. In terms of assembly, component of a multi-subunit COQ enzyme complex, composed of at least coq3, coq4, coq5, coq6, coq7 and coq9.

The protein localises to the mitochondrion inner membrane. It catalyses the reaction a 2-methoxy-6-(all-trans-polyprenyl)benzene-1,4-diol + S-adenosyl-L-methionine = a 5-methoxy-2-methyl-3-(all-trans-polyprenyl)benzene-1,4-diol + S-adenosyl-L-homocysteine + H(+). The protein operates within cofactor biosynthesis; ubiquinone biosynthesis. Methyltransferase required for the conversion of 2-polyprenyl-6-methoxy-1,4-benzoquinol (DDMQH2) to 2-polyprenyl-3-methyl-6-methoxy-1,4-benzoquinol (DMQH2). The sequence is that of 2-methoxy-6-polyprenyl-1,4-benzoquinol methylase, mitochondrial from Xenopus laevis (African clawed frog).